The chain runs to 444 residues: Baeyer-Villiger oxidase ptaJ (444 aa).

It belongs to the questin oxidase family. It depends on NADPH as a cofactor.

Its pathway is secondary metabolite biosynthesis. In terms of biological role, baeyer-Villiger oxidase; part of the gene cluster that mediates the biosynthesis of pestheic acid, a diphenyl ether which is a biosynthetic precursor of the unique chloropupukeananes. The biosynthesis initiates from condensation of acetate and malonate units catalyzed by the non-reducing PKS ptaA. As the ptaA protein is TE/CLC domain-deficient, hydrolysis and Claisen cyclization of the polyketide could be catalyzed by ptaB containing a beta-lactamase domain. The ptaB protein might hydrolyze the thioester bond between the ACP of ptaA and the intermediate to release atrochrysone carboxylic acid, which is spontaneously dehydrated to form endocrocin anthrone. Endocrocin anthrone is then converted to endocrocin, catalyzed by the anthrone oxygenase ptaC. Spontaneous decarboxylation of endocrocin occurs to generate emodin. An O-methyltransferase (ptaH or ptaI) could methylate emodin to form physcion. PtaJ could then catalyze the oxidative cleavage of physcion, and rotation of the intermediate could then afford desmethylisosulochrin. PtaF, a putative NADH-dependent oxidoreductase, might also participate in the oxidative cleavage step. Desmethylisosulochrin is then transformed by another O-methyltransferase (ptaH or ptaI) to form isosulochrin. Chlorination of isosulochrin by ptaM in the cyclohexadienone B ring then produces chloroisosulochrin. PtaE is responsible for the oxidative coupling reactions of both benzophenones isosulouchrin and chloroisosulouchrin to RES-1214-1 and pestheic acid respectively, regardless of chlorination. The chain is Baeyer-Villiger oxidase ptaJ from Pestalotiopsis fici (strain W106-1 / CGMCC3.15140).